Here is a 302-residue protein sequence, read N- to C-terminus: Pentatricopeptide repeat-containing protein At4g38150 (302 aa).

Residues 26-40 are compositionally biased toward polar residues; sequence SATRFLSTGDNGQVD. Disordered regions lie at residues 26–82 and 94–116; these read SATR…TTLS and VNQDSRETPKPEQYPQEPLPPPE. Residues 54-67 show a composition bias toward basic and acidic residues; the sequence is LRGERSSNSHREPP. PPR repeat units follow at residues 130-164, 165-199, 200-234, and 235-269; these read LIPNAVAMLDGLCKDGLVQEAMKLFGLMRDKGTIP, EVVIYTAVVEAFCKAHKIEDAKRIFRKMQNNGIAP, NAFSYGVLVQGLYNCNMLDDAVAFCSEMLESGHSP, and NVPTFVELVDALCRVKGVEQAQSAIDTLNQKGFAV.

It belongs to the PPR family. P subfamily.

The protein is Pentatricopeptide repeat-containing protein At4g38150 of Arabidopsis thaliana (Mouse-ear cress).